The primary structure comprises 406 residues: Glycosyltransferase GlyE (406 aa).

Residues 3-265 form a GT8 domain region; that stretch reads NTKRAVVFAG…SVILNEWFSK (263 aa). Residues 11 to 16 and 106 to 107 contribute to the UDP site; these read AGDYAY and DS. D106, D108, and H227 together coordinate Mn(2+). 227-233 serves as a coordination point for UDP; it reads HYISQDK.

In the N-terminal section; belongs to the glycosyltransferase 8 family. Requires Mn(2+) as cofactor.

The protein operates within protein modification; protein glycosylation. Involved in the polymorphic O-glycosylation of the serine-rich repeat protein PsrP. Catalyzes the third step in glycosylation of PsrP in this bacteria. Transfers galactose from UDP-galactose to the terminal glucose moiety of already-glycosylated PsrP (using the short substrate PsrP-GlcNAc-Glc). Has a very marked preference for PsrP substrate that has already been modified by GlcNAc and glucose. Has hydrolytic activity against UDP-galactose but none against UDP-glucose. In terms of biological role, also catalyzes the fourth step in glycosylation of PsrP in this bacteria. Can transfer the sugar from UDP-galactose to the terminal sugar moiety of PsrP-GlcNAc-Glc-Glc and of PsrP-GlcNAc-Glc-Gal. In Streptococcus pneumoniae serotype 4 (strain ATCC BAA-334 / TIGR4), this protein is Glycosyltransferase GlyE.